Here is a 99-residue protein sequence, read N- to C-terminus: Integration host factor subunit alpha (99 aa).

Belongs to the bacterial histone-like protein family. Heterodimer of an alpha and a beta chain.

Its function is as follows. This protein is one of the two subunits of integration host factor, a specific DNA-binding protein that functions in genetic recombination as well as in transcriptional and translational control. This Mannheimia haemolytica (Pasteurella haemolytica) protein is Integration host factor subunit alpha (ihfA).